The sequence spans 35 residues: Photosystem II reaction center protein T (35 aa).

Residues 3–23 (ALVYTFLLVGTLGIIFFAIFF) traverse the membrane as a helical segment.

Belongs to the PsbT family. In terms of assembly, PSII is composed of 1 copy each of membrane proteins PsbA, PsbB, PsbC, PsbD, PsbE, PsbF, PsbH, PsbI, PsbJ, PsbK, PsbL, PsbM, PsbT, PsbY, PsbZ, Psb30/Ycf12, at least 3 peripheral proteins of the oxygen-evolving complex and a large number of cofactors. It forms dimeric complexes.

The protein resides in the plastid. Its subcellular location is the chloroplast thylakoid membrane. Found at the monomer-monomer interface of the photosystem II (PS II) dimer, plays a role in assembly and dimerization of PSII. PSII is a light-driven water plastoquinone oxidoreductase, using light energy to abstract electrons from H(2)O, generating a proton gradient subsequently used for ATP formation. This is Photosystem II reaction center protein T from Zygnema circumcarinatum (Green alga).